Here is a 48-residue protein sequence, read N- to C-terminus: Disintegrin leucogastin-A (48 aa).

The 47-residue stretch at 1–47 folds into the Disintegrin domain; that stretch reads DCASGPCCRDCKFLEEFTICNMARGDDMNDYCNGKTCDCPRNPHKWP. Cystine bridges form between Cys-2–Cys-11, Cys-7–Cys-32, Cys-8–Cys-37, and Cys-20–Cys-39. Positions 24–26 match the Cell attachment site motif; that stretch reads RGD.

It belongs to the venom metalloproteinase (M12B) family. P-II subfamily. P-IIa sub-subfamily. In terms of assembly, monomer (disintegrin). In terms of tissue distribution, expressed by the venom gland.

It is found in the secreted. Functionally, inhibits ADP-induced human platelet aggregation. The polypeptide is Disintegrin leucogastin-A (Echis leucogaster (Roman's saw-scaled viper)).